A 698-amino-acid polypeptide reads, in one-letter code: Ion-translocating oxidoreductase complex subunit C (698 aa).

4Fe-4S ferredoxin-type domains lie at 366 to 397 (TEMG…QQLY) and 407 to 436 (KARN…VQYY). [4Fe-4S] cluster contacts are provided by Cys377, Cys380, Cys383, Cys387, Cys416, Cys419, Cys422, and Cys426.

This sequence belongs to the 4Fe4S bacterial-type ferredoxin family. RnfC subfamily. In terms of assembly, the complex is composed of six subunits: RnfA, RnfB, RnfC, RnfD, RnfE and RnfG. The cofactor is [4Fe-4S] cluster.

It is found in the cell inner membrane. Its function is as follows. Part of a membrane-bound complex that couples electron transfer with translocation of ions across the membrane. The chain is Ion-translocating oxidoreductase complex subunit C from Yersinia pseudotuberculosis serotype O:3 (strain YPIII).